We begin with the raw amino-acid sequence, 404 residues long: Lipase lipl-3 (404 aa).

The signal sequence occupies residues 1–20; that stretch reads MCSSLCALLLVILAVHNVHA. Asn65 carries N-linked (GlcNAc...) asparagine glycosylation. The Nucleophile role is filled by Ser168. The N-linked (GlcNAc...) asparagine glycan is linked to Asn272. Catalysis depends on charge relay system residues Asp344 and His376.

It belongs to the AB hydrolase superfamily. Lipase family.

The protein localises to the secreted. It localises to the lysosome lumen. Its function is as follows. Lipase that, together with lipl-1, plays a role in the response to nutrient deprivation by controlling lipid metabolism. Specifically, involved in the breakdown of lipids during lipophagy, a process during which lipids contained in lipid droplets that have been delivered to lysosomes by autophagy are degraded. In Caenorhabditis elegans, this protein is Lipase lipl-3.